Here is a 198-residue protein sequence, read N- to C-terminus: Putative glutathione S-transferase alpha-5 (198 aa).

The region spanning threonine 2–glycine 78 is the GST N-terminal domain. Residues tyrosine 8, arginine 42, glutamine 49–leucine 50, and glutamine 62–threonine 63 each bind glutathione. The 119-residue stretch at threonine 80–phenylalanine 198 folds into the GST C-terminal domain.

It belongs to the GST superfamily. Alpha family.

It carries out the reaction RX + glutathione = an S-substituted glutathione + a halide anion + H(+). In terms of biological role, conjugation of reduced glutathione to a wide number of exogenous and endogenous hydrophobic electrophiles. The protein is Putative glutathione S-transferase alpha-5 (gsta5) of Dictyostelium discoideum (Social amoeba).